The chain runs to 203 residues: Endo-type membrane-bound lytic murein transglycosylase A (203 aa).

The first 15 residues, 1–15 (MKLRWFAFLIVLLAG), serve as a signal peptide directing secretion. C16 carries the N-palmitoyl cysteine lipid modification. C16 is lipidated: S-diacylglycerol cysteine.

It belongs to the transglycosylase Slt family.

It localises to the cell outer membrane. The catalysed reaction is Endolytic cleavage of the (1-&gt;4)-beta-glycosidic linkage between N-acetylmuramic acid (MurNAc) and N-acetylglucosamine (GlcNAc) residues in peptidoglycan with concomitant formation of a 1,6-anhydrobond in the MurNAc residue.. In terms of biological role, murein-degrading enzyme. May play a role in recycling of muropeptides during cell elongation and/or cell division. Preferentially cleaves at a distance of more than two disaccharide units from the ends of the glycan chain. The polypeptide is Endo-type membrane-bound lytic murein transglycosylase A (Shigella dysenteriae serotype 1 (strain Sd197)).